Consider the following 78-residue polypeptide: Large ribosomal subunit protein eL20 (78 aa).

The protein belongs to the eukaryotic ribosomal protein eL20 family. As to quaternary structure, part of the 50S ribosomal subunit. Binds 23S rRNA.

This chain is Large ribosomal subunit protein eL20, found in Methanothermobacter thermautotrophicus (strain ATCC 29096 / DSM 1053 / JCM 10044 / NBRC 100330 / Delta H) (Methanobacterium thermoautotrophicum).